The sequence spans 345 residues: Protein RecA (345 aa).

81-88 (GPESSGKT) is an ATP binding site.

Belongs to the RecA family.

It is found in the cytoplasm. Functionally, can catalyze the hydrolysis of ATP in the presence of single-stranded DNA, the ATP-dependent uptake of single-stranded DNA by duplex DNA, and the ATP-dependent hybridization of homologous single-stranded DNAs. It interacts with LexA causing its activation and leading to its autocatalytic cleavage. This chain is Protein RecA, found in Mycoplasma mycoides.